A 574-amino-acid chain; its full sequence is Putative thiamine pyrophosphate-containing protein YdaP (574 aa).

Residues 28–55 (DSINEFIEELRHERNQLKFIQTRHEEVA) adopt a coiled-coil conformation. Glu-52 is a binding site for thiamine diphosphate. FAD-binding positions include 256 to 277 (IGTK…LGTS) and 294 to 313 (DSDP…LVCD). Residues 384-464 (TVTVWMARHF…ITVVILNNEN (81 aa)) form a thiamine pyrophosphate binding region. Positions 435 and 462 each coordinate Mg(2+).

It belongs to the TPP enzyme family. Mg(2+) is required as a cofactor. Requires thiamine diphosphate as cofactor.

This Bacillus subtilis (strain 168) protein is Putative thiamine pyrophosphate-containing protein YdaP (ydaP).